We begin with the raw amino-acid sequence, 306 residues long: Sulfate adenylyltransferase subunit 2 (306 aa).

Belongs to the PAPS reductase family. CysD subfamily. As to quaternary structure, heterodimer composed of CysD, the smaller subunit, and CysN.

It carries out the reaction sulfate + ATP + H(+) = adenosine 5'-phosphosulfate + diphosphate. Its pathway is sulfur metabolism; hydrogen sulfide biosynthesis; sulfite from sulfate: step 1/3. Its function is as follows. With CysN forms the ATP sulfurylase (ATPS) that catalyzes the adenylation of sulfate producing adenosine 5'-phosphosulfate (APS) and diphosphate, the first enzymatic step in sulfur assimilation pathway. APS synthesis involves the formation of a high-energy phosphoric-sulfuric acid anhydride bond driven by GTP hydrolysis by CysN coupled to ATP hydrolysis by CysD. This chain is Sulfate adenylyltransferase subunit 2, found in Brucella anthropi (strain ATCC 49188 / DSM 6882 / CCUG 24695 / JCM 21032 / LMG 3331 / NBRC 15819 / NCTC 12168 / Alc 37) (Ochrobactrum anthropi).